The primary structure comprises 817 residues: LPS-assembly protein LptD (817 aa).

The signal sequence occupies residues 1 to 26; the sequence is MPALVVSPDLVRGAAGASAAPTPAPA. The disordered stretch occupies residues 1-101; sequence MPALVVSPDL…ARKPGSTEVR (101 aa). The segment covering 13 to 90 has biased composition (low complexity); it reads GAAGASAAPT…PAASASPADA (78 aa).

It belongs to the LptD family. As to quaternary structure, component of the lipopolysaccharide transport and assembly complex. Interacts with LptE and LptA.

It is found in the cell outer membrane. Together with LptE, is involved in the assembly of lipopolysaccharide (LPS) at the surface of the outer membrane. The polypeptide is LPS-assembly protein LptD (Azoarcus sp. (strain BH72)).